A 511-amino-acid chain; its full sequence is Mediator of RNA polymerase II transcription subunit 17 (511 aa).

This sequence belongs to the Mediator complex subunit 17 family. In terms of assembly, component of the Mediator complex.

It is found in the nucleus. Its function is as follows. Component of the Mediator complex, a coactivator involved in the regulated transcription of nearly all RNA polymerase II-dependent genes. Mediator functions as a bridge to convey information from gene-specific regulatory proteins to the basal RNA polymerase II transcription machinery. Mediator is recruited to promoters by direct interactions with regulatory proteins and serves as a scaffold for the assembly of a functional preinitiation complex with RNA polymerase II and the general transcription factors. The sequence is that of Mediator of RNA polymerase II transcription subunit 17 (SRB4) from Yarrowia lipolytica (strain CLIB 122 / E 150) (Yeast).